A 108-amino-acid polypeptide reads, in one-letter code: Ferredoxin, plant-type (108 aa).

In terms of domain architecture, 2Fe-2S ferredoxin-type spans Phe5–Pro96. 4 residues coordinate [2Fe-2S] cluster: Cys40, Cys45, Cys48, and Cys80.

The protein belongs to the 2Fe2S plant-type ferredoxin family.

It functions in the pathway aromatic compound metabolism; catechol degradation. Functionally, ferredoxins are iron-sulfur proteins that transfer electrons in a wide variety of metabolic reactions. This chain is Ferredoxin, plant-type (nahT), found in Pseudomonas putida (Arthrobacter siderocapsulatus).